The chain runs to 210 residues: ATP-dependent Clp protease proteolytic subunit (210 aa).

The active-site Nucleophile is serine 107. The active site involves histidine 132.

It belongs to the peptidase S14 family. Fourteen ClpP subunits assemble into 2 heptameric rings which stack back to back to give a disk-like structure with a central cavity, resembling the structure of eukaryotic proteasomes.

It localises to the cytoplasm. It carries out the reaction Hydrolysis of proteins to small peptides in the presence of ATP and magnesium. alpha-casein is the usual test substrate. In the absence of ATP, only oligopeptides shorter than five residues are hydrolyzed (such as succinyl-Leu-Tyr-|-NHMec, and Leu-Tyr-Leu-|-Tyr-Trp, in which cleavage of the -Tyr-|-Leu- and -Tyr-|-Trp bonds also occurs).. Its function is as follows. Cleaves peptides in various proteins in a process that requires ATP hydrolysis. Has a chymotrypsin-like activity. Plays a major role in the degradation of misfolded proteins. This Cereibacter sphaeroides (strain ATCC 17029 / ATH 2.4.9) (Rhodobacter sphaeroides) protein is ATP-dependent Clp protease proteolytic subunit.